The following is a 172-amino-acid chain: Large ribosomal subunit protein bL17m (172 aa).

A mitochondrion-targeting transit peptide spans 1 to 8 (MRLSFAAA).

The protein belongs to the bacterial ribosomal protein bL17 family. In terms of assembly, component of the mitochondrial ribosome large subunit (39S) which comprises a 16S rRNA and about 50 distinct proteins.

Its subcellular location is the mitochondrion. This chain is Large ribosomal subunit protein bL17m (MRPL17), found in Bos taurus (Bovine).